The primary structure comprises 1071 residues: Fused isobutyryl-CoA mutase (1071 aa).

Residues 12–149 enclose the B12-binding domain; it reads PVRFVTSAAL…QTCDVDLTGE (138 aa). An adenosylcob(III)alamin-binding site is contributed by His25. Residues 153–400 form a GTPase chaperone MeaI region; the sequence is VEAVLAGERT…YQHLLELLGA (248 aa). 203 to 208 contributes to the GTP binding site; the sequence is GSGKSS. The Mg(2+) site is built by Ser207, Val232, Asp233, and Asp246. Arg249 contacts GTP. Residues Glu293 and Thr294 each coordinate Mg(2+). Position 340–343 (340–343) interacts with GTP; the sequence is NKFE. Residues 401–558 form a linker region; sequence RGLPVDEGVL…RSENLPGHFP (158 aa). Residues Phe566, Arg601, Arg707, Tyr751, Ser800, Arg835, and Lys840 each coordinate substrate. Glu952 and Asn1070 together coordinate GTP.

This sequence belongs to the IcmF family. Homodimer. It depends on adenosylcob(III)alamin as a cofactor. Mg(2+) is required as a cofactor.

It carries out the reaction 2-methylpropanoyl-CoA = butanoyl-CoA. The catalysed reaction is GTP + H2O = GDP + phosphate + H(+). Functionally, catalyzes the reversible interconversion of isobutyryl-CoA and n-butyryl-CoA, using radical chemistry. Also exhibits GTPase activity, associated with its G-protein domain (MeaI) that functions as a chaperone that assists cofactor delivery and proper holo-enzyme assembly. Does not exhibit methylmalonyl-CoA mutase (MCM) activity. In Nocardia farcinica (strain IFM 10152), this protein is Fused isobutyryl-CoA mutase.